We begin with the raw amino-acid sequence, 306 residues long: Beta-lactamase (306 aa).

The tat-type signal signal peptide spans 1–34 (MDRTTARPNRRAVLATGVGAALAATAAAAGPAHA). Residue S82 is the Acyl-ester intermediate of the active site. Residue 250 to 252 (KTG) coordinates substrate.

It belongs to the class-A beta-lactamase family. Post-translationally, predicted to be exported by the Tat system. The position of the signal peptide cleavage has not been experimentally proven.

It catalyses the reaction a beta-lactam + H2O = a substituted beta-amino acid. This Streptomyces fradiae (Streptomyces roseoflavus) protein is Beta-lactamase (blaF).